The primary structure comprises 173 residues: MTPSFATCDLCDAHKNDVSGAFRVLPPVFRDFGGVRQFCGPVVTVKCFEDNSSVKAAVESVGYQETPAGRVGKVLVVDGGGSLRRALLGGNLGAAAARNGWAGVVIDGCVRDVSELAAVGLGIRALASMPLPTEKRGEGQSDLALQIQGVWVRPGDWLYADEDGMVLAAGRLV.

Substrate is bound by residues 89–92 and Arg111; that span reads GGNL. A divalent metal cation is bound at residue Asp112.

This sequence belongs to the class II aldolase/RraA-like family. As to quaternary structure, homotrimer. It depends on a divalent metal cation as a cofactor.

It carries out the reaction 4-hydroxy-4-methyl-2-oxoglutarate = 2 pyruvate. It catalyses the reaction oxaloacetate + H(+) = pyruvate + CO2. Its function is as follows. Catalyzes the aldol cleavage of 4-hydroxy-4-methyl-2-oxoglutarate (HMG) into 2 molecules of pyruvate. Also contains a secondary oxaloacetate (OAA) decarboxylase activity due to the common pyruvate enolate transition state formed following C-C bond cleavage in the retro-aldol and decarboxylation reactions. This chain is Putative 4-hydroxy-4-methyl-2-oxoglutarate aldolase, found in Albidiferax ferrireducens (strain ATCC BAA-621 / DSM 15236 / T118) (Rhodoferax ferrireducens).